We begin with the raw amino-acid sequence, 603 residues long: MAEVGLSQNSYASANHDKKSEQQIRRRVAEFHPNVWEYEFLQSLSSPYGAPSYCERINILIEEIKMDIFDGLVGDGEKNMNPSAYDLLERFFVVDILQSLGIERHFKKEIKAVLDYTYKYWNDEKGISLASGNLIVDLNTNALGFKVLRLNEYYVSPDVFQNFQDEMGQFIDLENFKEDESKLRSLLSLYRASEICFPEENILKQAKMFASTCLRQAIEENRELVNKSQLIIEVEYIMKYPWTCRVPRWEVWNYIKIFRGDTDASMCMKGVYEMPSDKRTKILELAILDFNILQDQHHNELKILSKWWNETKVKELNFFRQRHVEFYFLYACGLYEKELSATRLCFAKVGALITLLDDIFDTYGTIDELVPFATALIKWDMSIMNHLPEYMKTCFQFAYKTYMEIATEAEKIHGPCVQKWMHDTWKTIILAQLQDAEWIANNYLPSLTEYLESSVPSTTVPVLSLFSMLLIDTIFPDDIIEKITKFQSCVAWGCRLVDDSKDFQDEKEHGESASWIECYMKENPGTTRKQALDHANMLIESNFEELIKHRIFYEYCIPSTCKRLYFDMYRSVAFIFKDIDGFSKSSKAIRDDIKKILVEPIYF.

Residues 1–13 show a composition bias toward polar residues; the sequence is MAEVGLSQNSYAS. The disordered stretch occupies residues 1 to 23; the sequence is MAEVGLSQNSYASANHDKKSEQQ. Asp357, Asp361, Asp498, and Glu506 together coordinate Mg(2+). The DDXXD motif motif lies at 357–361; that stretch reads DDIFD.

Belongs to the terpene synthase family. Tpsa subfamily. Requires Mg(2+) as cofactor. Mn(2+) is required as a cofactor. Mostly expressed in leaves and, to a lower extent, in stems and xylem.

It carries out the reaction (2E,6E)-farnesyl diphosphate = beta-cadinene + diphosphate. Its pathway is secondary metabolite biosynthesis; terpenoid biosynthesis. Sesquiterpene synthase involved in the biosynthesis of volatile compounds. Mediates the conversion of (2E,6E)-farnesyl diphosphate (FPP) into beta-cadinene. Not active with geranyl diphosphate (GPP) and geranylgeranyl diphosphate (GGPP) as substrates. The sequence is that of Sesquiterpene synthase Cad from Chamaecyparis formosensis (Formosan cypress).